The chain runs to 237 residues: Ribonuclease PH (237 aa).

Phosphate-binding positions include R86 and 124-126 (GTR).

It belongs to the RNase PH family. As to quaternary structure, homohexameric ring arranged as a trimer of dimers.

It carries out the reaction tRNA(n+1) + phosphate = tRNA(n) + a ribonucleoside 5'-diphosphate. Its function is as follows. Phosphorolytic 3'-5' exoribonuclease that plays an important role in tRNA 3'-end maturation. Removes nucleotide residues following the 3'-CCA terminus of tRNAs; can also add nucleotides to the ends of RNA molecules by using nucleoside diphosphates as substrates, but this may not be physiologically important. Probably plays a role in initiation of 16S rRNA degradation (leading to ribosome degradation) during starvation. This is Ribonuclease PH from Shewanella sediminis (strain HAW-EB3).